We begin with the raw amino-acid sequence, 287 residues long: Protease HtpX (287 aa).

Helical transmembrane passes span 4–24 and 33–53; these read IFLLIATNLAVLLVASIVMSI and GGLLVFAAIFGFGGAFISLAI. H139 contacts Zn(2+). The active site involves E140. A Zn(2+)-binding site is contributed by H143. 2 helical membrane-spanning segments follow: residues 154–174 and 195–215; these read LIQGVVNTFVIFAARVVAGII and AVVFVLDMLFGILASIIVAYF. A Zn(2+)-binding site is contributed by E220.

Belongs to the peptidase M48B family. Zn(2+) is required as a cofactor.

The protein localises to the cell inner membrane. This is Protease HtpX from Shewanella baltica (strain OS223).